We begin with the raw amino-acid sequence, 245 residues long: 1-(5-phosphoribosyl)-5-[(5-phosphoribosylamino)methylideneamino] imidazole-4-carboxamide isomerase (245 aa).

The active-site Proton acceptor is the Asp-7. Asp-129 functions as the Proton donor in the catalytic mechanism.

The protein belongs to the HisA/HisF family.

The protein resides in the cytoplasm. The catalysed reaction is 1-(5-phospho-beta-D-ribosyl)-5-[(5-phospho-beta-D-ribosylamino)methylideneamino]imidazole-4-carboxamide = 5-[(5-phospho-1-deoxy-D-ribulos-1-ylimino)methylamino]-1-(5-phospho-beta-D-ribosyl)imidazole-4-carboxamide. Its pathway is amino-acid biosynthesis; L-histidine biosynthesis; L-histidine from 5-phospho-alpha-D-ribose 1-diphosphate: step 4/9. In Tolumonas auensis (strain DSM 9187 / NBRC 110442 / TA 4), this protein is 1-(5-phosphoribosyl)-5-[(5-phosphoribosylamino)methylideneamino] imidazole-4-carboxamide isomerase.